A 26-amino-acid polypeptide reads, in one-letter code: ALWKNMLSGIGKLAGQAALGAVKTLV.

V26 bears the Valine amide mark.

In terms of tissue distribution, expressed by the skin glands.

It is found in the secreted. In terms of biological role, has antimicrobial activity. This chain is Dermaseptin-J3, found in Phasmahyla jandaia (Jandaia leaf frog).